We begin with the raw amino-acid sequence, 222 residues long: Phosphoribosylformylglycinamidine synthase subunit PurQ (222 aa).

One can recognise a Glutamine amidotransferase type-1 domain in the interval 2–222 (RTAVIQFPGS…FESLKGALVQ (221 aa)). Residue cysteine 87 is the Nucleophile of the active site. Catalysis depends on residues histidine 195 and glutamate 197.

In terms of assembly, part of the FGAM synthase complex composed of 1 PurL, 1 PurQ and 2 PurS subunits.

It localises to the cytoplasm. The enzyme catalyses N(2)-formyl-N(1)-(5-phospho-beta-D-ribosyl)glycinamide + L-glutamine + ATP + H2O = 2-formamido-N(1)-(5-O-phospho-beta-D-ribosyl)acetamidine + L-glutamate + ADP + phosphate + H(+). It catalyses the reaction L-glutamine + H2O = L-glutamate + NH4(+). Its pathway is purine metabolism; IMP biosynthesis via de novo pathway; 5-amino-1-(5-phospho-D-ribosyl)imidazole from N(2)-formyl-N(1)-(5-phospho-D-ribosyl)glycinamide: step 1/2. In terms of biological role, part of the phosphoribosylformylglycinamidine synthase complex involved in the purines biosynthetic pathway. Catalyzes the ATP-dependent conversion of formylglycinamide ribonucleotide (FGAR) and glutamine to yield formylglycinamidine ribonucleotide (FGAM) and glutamate. The FGAM synthase complex is composed of three subunits. PurQ produces an ammonia molecule by converting glutamine to glutamate. PurL transfers the ammonia molecule to FGAR to form FGAM in an ATP-dependent manner. PurS interacts with PurQ and PurL and is thought to assist in the transfer of the ammonia molecule from PurQ to PurL. This Deinococcus geothermalis (strain DSM 11300 / CIP 105573 / AG-3a) protein is Phosphoribosylformylglycinamidine synthase subunit PurQ.